A 290-amino-acid polypeptide reads, in one-letter code: 33 kDa chaperonin (290 aa).

2 cysteine pairs are disulfide-bonded: C236–C238 and C269–C272.

The protein belongs to the HSP33 family. Post-translationally, under oxidizing conditions two disulfide bonds are formed involving the reactive cysteines. Under reducing conditions zinc is bound to the reactive cysteines and the protein is inactive.

It localises to the cytoplasm. In terms of biological role, redox regulated molecular chaperone. Protects both thermally unfolding and oxidatively damaged proteins from irreversible aggregation. Plays an important role in the bacterial defense system toward oxidative stress. This Acholeplasma laidlawii (strain PG-8A) protein is 33 kDa chaperonin.